The following is a 215-amino-acid chain: 3,4-dihydroxy-2-butanone 4-phosphate synthase (215 aa).

D-ribulose 5-phosphate contacts are provided by residues 38-39, aspartate 43, 151-155, and glutamate 175; these read RE and RRGHT. Glutamate 39 is a binding site for Mg(2+). Histidine 154 contributes to the Mg(2+) binding site.

It belongs to the DHBP synthase family. Homodimer. It depends on Mg(2+) as a cofactor. Requires Mn(2+) as cofactor.

It carries out the reaction D-ribulose 5-phosphate = (2S)-2-hydroxy-3-oxobutyl phosphate + formate + H(+). Its pathway is cofactor biosynthesis; riboflavin biosynthesis; 2-hydroxy-3-oxobutyl phosphate from D-ribulose 5-phosphate: step 1/1. Functionally, catalyzes the conversion of D-ribulose 5-phosphate to formate and 3,4-dihydroxy-2-butanone 4-phosphate. The polypeptide is 3,4-dihydroxy-2-butanone 4-phosphate synthase (Haemophilus influenzae (strain ATCC 51907 / DSM 11121 / KW20 / Rd)).